Reading from the N-terminus, the 285-residue chain is Pseudouridine-5'-phosphate glycosidase (285 aa).

The Proton donor role is filled by Glu-17. Lys-77 and Val-97 together coordinate substrate. Asp-126 is a Mn(2+) binding site. Residue 128-130 (SQD) participates in substrate binding. The active-site Nucleophile is Lys-147.

The protein belongs to the pseudouridine-5'-phosphate glycosidase family. In terms of assembly, homotrimer. Mn(2+) is required as a cofactor.

It carries out the reaction D-ribose 5-phosphate + uracil = psi-UMP + H2O. In terms of biological role, catalyzes the reversible cleavage of pseudouridine 5'-phosphate (PsiMP) to ribose 5-phosphate and uracil. Functions biologically in the cleavage direction, as part of a pseudouridine degradation pathway. In Thermotoga maritima (strain ATCC 43589 / DSM 3109 / JCM 10099 / NBRC 100826 / MSB8), this protein is Pseudouridine-5'-phosphate glycosidase.